The sequence spans 1593 residues: Nischarin (1593 aa).

The tract at residues 1–134 (MAAATLSFGP…GVTAALAEEL (134 aa)) is necessary for binding to phosphoinositide-3-P; not sufficient for targeting to endosomes. The PX domain maps to 12–122 (REAEPAKEAR…AHFLHFHLYE (111 aa)). The interval 121 to 695 (YEVNGVTAAL…ERLALEWALG (575 aa)) is necessary for homooligomerization and targeting to endosomes. Positions 246 to 869 (MSVRFSATSM…LVYSDKRMVQ (624 aa)) are interaction with PAK1. LRR repeat units follow at residues 290–311 (ALTT…VKLI), 313–334 (KIEY…QHLY), 335–356 (NLVH…HTKL), 358–379 (NVKT…HKLY), 380–401 (SLVN…KSIG), and 405–426 (CLER…RTKV). Residues 466–480 (SKLSNTEKKAGEDFR) show a composition bias toward basic and acidic residues. The interval 466–499 (SKLSNTEKKAGEDFRLPPAPCIRPGGSPPAAPAS) is disordered. A compositionally biased stretch (pro residues) spans 482-496 (PPAPCIRPGGSPPAA). Phosphoserine is present on residues S543, S545, and S548. Residues 624-694 (IEAANQREEA…EERLALEWAL (71 aa)) adopt a coiled-coil conformation. The interval 629–687 (QREEAHGEQGEEEEEEEEEEDVAENRYFEMGPPDAEEEEGSGQGEEDEEDEDEEAEEER) is disordered. 2 stretches are compositionally biased toward acidic residues: residues 638 to 650 (GEEE…EEDV) and 662 to 685 (DAEE…EAEE). Residues 661 to 869 (PDAEEEEGSG…LVYSDKRMVQ (209 aa)) form an interaction with LIMK region. The tract at residues 709 to 807 (KVLWCFLIHV…ANLHEFHADL (99 aa)) is interaction with ITGA5. The segment at 1016-1185 (NPSAKPRNQP…PAGGPAPAEA (170 aa)) is disordered. Composition is skewed to low complexity over residues 1038–1069 (ETPA…LAPV) and 1081–1158 (AEAP…APAP). Tandem repeats lie at residues 1081–1086 (AEAPAA), 1087–1092 (AEAPAA), 1093–1098 (AEAPAA), 1099–1104 (AEAPAA), 1105–1110 (AEAPAA), 1111–1116 (AEAPAA), 1123–1128 (AEAPAA), 1129–1134 (AEAPAA), 1135–1140 (AEAPAA), and 1141–1146 (AEAPAA). Residues 1081-1146 (AEAPAAAEAP…APAAAEAPAA (66 aa)) are 10 X 6 AA tandem repeat of A-E-A-P-A-A. Positions 1159-1179 (NQAPAPARGPAPARGPAPAGG) are enriched in pro residues. T1371 carries the phosphothreonine modification. Residue S1373 is modified to Phosphoserine.

In terms of assembly, homooligomer. Interacts with GRB2. Interacts with PIK3R1; probably associates with the PI3-kinase complex. Interacts with IRS4. Found in a complex with ITGA5 and PAK1. Found in a complex with LIMK1 and PAK1. Interacts with ITGA5 (via cytoplasmic domain); this interaction is direct. Interacts with PAK1 (via kinase domain); this interaction is direct and is increased upon activation of PAK1. Interacts with LIMK1 (via PDZ and kinase domain); this interaction is direct. Interacts with LIMK2; this interaction depends on LIMK2 activity. Interacts with RAC1 (activated state). Interacts with STK11; this interaction may increase STK11 activity. As to expression, highly expressed in brain and kidney. Moderately expressed in heart, liver, lung and skeletal muscle. Not detected in spleen and testis.

Its subcellular location is the cell membrane. It localises to the cytoplasm. It is found in the early endosome. The protein resides in the recycling endosome. In terms of biological role, acts either as the functional imidazoline-1 receptor (I1R) candidate or as a membrane-associated mediator of the I1R signaling. Binds numerous imidazoline ligands that induces initiation of cell-signaling cascades triggering to cell survival, growth and migration. Its activation by the agonist rilmenidine induces an increase in phosphorylation of mitogen-activated protein kinases MAPK1 and MAPK3 in rostral ventrolateral medulla (RVLM) neurons that exhibited rilmenidine-evoked hypotension. Blocking its activation with efaroxan abolished rilmenidine-induced mitogen-activated protein kinase phosphorylation in RVLM neurons. Acts as a modulator of Rac-regulated signal transduction pathways. Suppresses Rac1-stimulated cell migration by interacting with PAK1 and inhibiting its kinase activity. Also blocks Pak-independent Rac signaling by interacting with RAC1 and inhibiting Rac1-stimulated NF-kB response element and cyclin D1 promoter activation. Also inhibits LIMK1 kinase activity by reducing LIMK1 'Tyr-508' phosphorylation. Inhibits Rac-induced cell migration and invasion in breast and colon epithelial cells. Inhibits lamellipodia formation, when overexpressed. Plays a role in protection against apoptosis. Involved in association with IRS4 in the enhancement of insulin activation of MAPK1 and MAPK3. When overexpressed, induces a redistribution of cell surface ITGA5 integrin to intracellular endosomal structures. The chain is Nischarin (Nisch) from Mus musculus (Mouse).